Here is an 808-residue protein sequence, read N- to C-terminus: Probable inorganic carbon transporter subunit DabA (808 aa).

Zn(2+) contacts are provided by C335, D337, H497, and C512.

Belongs to the inorganic carbon transporter (TC 9.A.2) DabA family. As to quaternary structure, forms a complex with DabB. The cofactor is Zn(2+).

It is found in the cell inner membrane. In terms of biological role, part of an energy-coupled inorganic carbon pump. In Rhodopseudomonas palustris (strain ATCC BAA-98 / CGA009), this protein is Probable inorganic carbon transporter subunit DabA.